An 81-amino-acid polypeptide reads, in one-letter code: Photosystem I iron-sulfur center (81 aa).

2 4Fe-4S ferredoxin-type domains span residues 2-31 (SHSV…MIPW) and 39-68 (IASA…VRVS). [4Fe-4S] cluster-binding residues include cysteine 11, cysteine 14, cysteine 17, cysteine 21, cysteine 48, cysteine 51, cysteine 54, and cysteine 58.

In terms of assembly, the eukaryotic PSI reaction center is composed of at least 11 subunits. It depends on [4Fe-4S] cluster as a cofactor.

It is found in the plastid. Its subcellular location is the chloroplast thylakoid membrane. It catalyses the reaction reduced [plastocyanin] + hnu + oxidized [2Fe-2S]-[ferredoxin] = oxidized [plastocyanin] + reduced [2Fe-2S]-[ferredoxin]. In terms of biological role, apoprotein for the two 4Fe-4S centers FA and FB of photosystem I (PSI); essential for photochemical activity. FB is the terminal electron acceptor of PSI, donating electrons to ferredoxin. The C-terminus interacts with PsaA/B/D and helps assemble the protein into the PSI complex. Required for binding of PsaD and PsaE to PSI. PSI is a plastocyanin-ferredoxin oxidoreductase, converting photonic excitation into a charge separation, which transfers an electron from the donor P700 chlorophyll pair to the spectroscopically characterized acceptors A0, A1, FX, FA and FB in turn. The polypeptide is Photosystem I iron-sulfur center (Daucus carota (Wild carrot)).